A 334-amino-acid chain; its full sequence is tRNA-dihydrouridine(20/20a) synthase (334 aa).

Residues 17–19 (PMM) and Q70 each bind FMN. The active-site Proton donor is the C100. Residues K139, H171, 211-213 (NGG), and 233-234 (GR) each bind FMN.

Belongs to the Dus family. DusA subfamily. It depends on FMN as a cofactor.

It catalyses the reaction 5,6-dihydrouridine(20) in tRNA + NADP(+) = uridine(20) in tRNA + NADPH + H(+). The enzyme catalyses 5,6-dihydrouridine(20) in tRNA + NAD(+) = uridine(20) in tRNA + NADH + H(+). The catalysed reaction is 5,6-dihydrouridine(20a) in tRNA + NADP(+) = uridine(20a) in tRNA + NADPH + H(+). It carries out the reaction 5,6-dihydrouridine(20a) in tRNA + NAD(+) = uridine(20a) in tRNA + NADH + H(+). Its function is as follows. Catalyzes the synthesis of 5,6-dihydrouridine (D), a modified base found in the D-loop of most tRNAs, via the reduction of the C5-C6 double bond in target uridines. Specifically modifies U20 and U20a in tRNAs. The polypeptide is tRNA-dihydrouridine(20/20a) synthase (dus2) (Synechocystis sp. (strain ATCC 27184 / PCC 6803 / Kazusa)).